The primary structure comprises 333 residues: Foldase protein PrsA (333 aa).

The N-terminal stretch at 1-19 is a signal peptide; it reads MKKRHLLIAGLACMTILGA. Cys20 is lipidated: N-palmitoyl cysteine. Cys20 carries the S-diacylglycerol cysteine lipid modification. Residues 155–245 form the PpiC domain; sequence LIEVEASHIL…YGYHIILVTD (91 aa). Residues 291–333 are disordered; it reads GLFDLPDAPPVEDTPEIDGEDASDEAEDQAEDADENAEEEDES. Residues 303–333 are compositionally biased toward acidic residues; that stretch reads DTPEIDGEDASDEAEDQAEDADENAEEEDES.

Belongs to the PrsA family.

Its subcellular location is the cell membrane. It catalyses the reaction [protein]-peptidylproline (omega=180) = [protein]-peptidylproline (omega=0). In terms of biological role, plays a major role in protein secretion by helping the post-translocational extracellular folding of several secreted proteins. This Halalkalibacterium halodurans (strain ATCC BAA-125 / DSM 18197 / FERM 7344 / JCM 9153 / C-125) (Bacillus halodurans) protein is Foldase protein PrsA.